The chain runs to 148 residues: Suppressor APC domain-containing protein 1 (148 aa).

Residues 120–148 (SRQQKGVTQPKEEMAQRGCTKGPRGPTRV) form a disordered region.

This is Suppressor APC domain-containing protein 1 (SAPCD1) from Homo sapiens (Human).